Here is a 237-residue protein sequence, read N- to C-terminus: Nodulation protein NolA (237 aa).

Residues 10–79 form the HTH merR-type domain; that stretch reads RWRIGELAEA…LVEIRKAMEG (70 aa). Positions 13–32 form a DNA-binding region, H-T-H motif; that stretch reads IGELAEATGVTVRTLHHYEH.

Functionally, involved in genotype-specific nodulation of soybeans. The protein is Nodulation protein NolA (nolA) of Bradyrhizobium diazoefficiens (strain JCM 10833 / BCRC 13528 / IAM 13628 / NBRC 14792 / USDA 110).